Consider the following 243-residue polypeptide: PF03932 family protein CutC (243 aa).

This sequence belongs to the CutC family.

The protein localises to the cytoplasm. The sequence is that of PF03932 family protein CutC from Histophilus somni (strain 2336) (Haemophilus somnus).